The primary structure comprises 662 residues: Protein distal antenna (662 aa).

One can recognise an HTH psq-type domain in the interval 21–72; that stretch reads TKGKRPLRHLTATDKIDAIQRIHDGESKASVARDIGVPESTLRGWCKNEEKL. The segment at residues 48–68 is a DNA-binding region (H-T-H motif); it reads KASVARDIGVPESTLRGWCKN. Disordered regions lie at residues 265-299, 348-407, 491-537, and 558-596; these read RNAR…STPS, YSQM…PEDT, PEDL…DDEV, and QSSP…KSTC. Positions 349–391 are enriched in low complexity; it reads SQMPRPSSPQQPQSTPPTTTTTQQQQPQSSTPPTATPPIVSTP. Residues 511–520 show a composition bias toward polar residues; that stretch reads FNPSPSTSIK. Residues 527–536 show a composition bias toward acidic residues; that stretch reads VDEDEDEDDE.

As to quaternary structure, homomers. Interacts with itself, danr, ey and dac to form a complex (or complexes) containing the RD factors.

It is found in the nucleus. Probable transcription factor with a role in the retinal determination (RD) network. Contributes to differentiation of antenna-specific characteristics. This is Protein distal antenna from Culex quinquefasciatus (Southern house mosquito).